The chain runs to 276 residues: Putative pyruvate, phosphate dikinase regulatory protein (276 aa).

ADP is bound at residue 154 to 161; that stretch reads GVSRTSKS.

The protein belongs to the pyruvate, phosphate/water dikinase regulatory protein family. PDRP subfamily.

It carries out the reaction N(tele)-phospho-L-histidyl/L-threonyl-[pyruvate, phosphate dikinase] + ADP = N(tele)-phospho-L-histidyl/O-phospho-L-threonyl-[pyruvate, phosphate dikinase] + AMP + H(+). The catalysed reaction is N(tele)-phospho-L-histidyl/O-phospho-L-threonyl-[pyruvate, phosphate dikinase] + phosphate + H(+) = N(tele)-phospho-L-histidyl/L-threonyl-[pyruvate, phosphate dikinase] + diphosphate. In terms of biological role, bifunctional serine/threonine kinase and phosphorylase involved in the regulation of the pyruvate, phosphate dikinase (PPDK) by catalyzing its phosphorylation/dephosphorylation. The chain is Putative pyruvate, phosphate dikinase regulatory protein from Wolbachia pipientis wMel.